The primary structure comprises 430 residues: Probable aspartic-type endopeptidase TRV_06366 (430 aa).

The N-terminal stretch at 1-17 (MHVSTLLVAVLLPLALS) is a signal peptide. Positions 18-87 (KPTPRKKTSS…SKATAGSGKE (70 aa)) are cleaved as a propeptide — activation peptide. A disordered region spans residues 61–104 (HEMEGYHPQPISKLPGNSKATAGSGKEGVESQDEKGEVVNNPTD). Residues 87–104 (EGVESQDEKGEVVNNPTD) show a composition bias toward basic and acidic residues. Residues 109–427 (FLSPVTIGGQ…DQRGPSISLA (319 aa)) enclose the Peptidase A1 domain. The active site involves D125. N306 is a glycosylation site (N-linked (GlcNAc...) asparagine). The active site involves D314.

Belongs to the peptidase A1 family.

It localises to the secreted. Its function is as follows. Probable secreted aspartic-type endopeptidase which contributes to virulence. The protein is Probable aspartic-type endopeptidase TRV_06366 of Trichophyton verrucosum (strain HKI 0517).